Consider the following 221-residue polypeptide: Putative efflux system component YhbJ (221 aa).

The helical transmembrane segment at 17 to 37 (LILTNIIGLIVVLAIIAGGAY) threads the bilayer.

It belongs to the membrane fusion protein (MFP) (TC 8.A.1) family.

It localises to the cell membrane. This Bacillus subtilis (strain 168) protein is Putative efflux system component YhbJ (yhbJ).